A 62-amino-acid polypeptide reads, in one-letter code: Sperm protamine P1 (62 aa).

The interval 1–62 is disordered; the sequence is MARCRRHSRS…RYSRRGRRRY (62 aa).

Belongs to the protamine P1 family. Testis.

The protein localises to the nucleus. It is found in the chromosome. Its function is as follows. Protamines substitute for histones in the chromatin of sperm during the haploid phase of spermatogenesis. They compact sperm DNA into a highly condensed, stable and inactive complex. This is Sperm protamine P1 (PRM1) from Planigale maculata sinualis (Common planigale).